The chain runs to 133 residues: Meiotically up-regulated gene 15 protein (133 aa).

It localises to the cytoplasm. The protein resides in the nucleus. Its function is as follows. Has a role in meiosis. This is Meiotically up-regulated gene 15 protein (mug15) from Schizosaccharomyces pombe (strain 972 / ATCC 24843) (Fission yeast).